We begin with the raw amino-acid sequence, 150 residues long: Troponin C, isotype gamma (150 aa).

The residue at position 1 (Met-1) is an N-acetylmethionine. EF-hand domains follow at residues 7-42 (EQLS…MGVK), 43-78 (ISEK…FLIE), 83-118 (ALKA…LDNR), and 119-150 (LTED…MMSG). Ca(2+) is bound by residues Asp-56, Asp-58, Ser-60, Glu-62, and Glu-67. Residues Asp-132, Asp-134, Ser-136, Thr-138, and Glu-143 each coordinate Ca(2+).

This sequence belongs to the troponin C family.

Troponin is the central regulatory protein of striated muscle contraction. Tn consists of three components: Tn-I which is the inhibitor of actomyosin ATPase, Tn-T which contains the binding site for tropomyosin and Tn-C. The binding of calcium to Tn-C abolishes the inhibitory action of Tn on actin filaments. The polypeptide is Troponin C, isotype gamma (Astacus leptodactylus (Turkish narrow-clawed crayfish)).